We begin with the raw amino-acid sequence, 84 residues long: Cell division topological specificity factor (84 aa).

The protein belongs to the MinE family.

In terms of biological role, prevents the cell division inhibition by proteins MinC and MinD at internal division sites while permitting inhibition at polar sites. This ensures cell division at the proper site by restricting the formation of a division septum at the midpoint of the long axis of the cell. This Burkholderia mallei (strain NCTC 10247) protein is Cell division topological specificity factor.